The primary structure comprises 150 residues: Large ribosomal subunit protein bL9 (150 aa).

The protein belongs to the bacterial ribosomal protein bL9 family.

Its function is as follows. Binds to the 23S rRNA. In Mycoplasma genitalium (strain ATCC 33530 / DSM 19775 / NCTC 10195 / G37) (Mycoplasmoides genitalium), this protein is Large ribosomal subunit protein bL9.